Consider the following 741-residue polypeptide: Penicillin-binding protein 1B (741 aa).

At 1–12 (MYPVNLKLSIKF) the chain is on the cytoplasmic side. Residues 13 to 33 (LFYFFLYFLLIIIIYGVYLYF) form a helical; Signal-anchor for type II membrane protein membrane-spanning segment. At 34–741 (KINQVIHGKI…WIRNHNIFCT (708 aa)) the chain is on the extracellular side. The interval 139–311 (LRLDPQLIAM…SLYNPWNNPV (173 aa)) is transglycosylase. Glu-177 serves as the catalytic Proton donor; for transglycosylase activity. The segment at 395 to 687 (ENAIRHGIQQ…STGAMKIYHN (293 aa)) is transpeptidase. The Acyl-ester intermediate; for transpeptidase activity role is filled by Ser-454.

The protein in the N-terminal section; belongs to the glycosyltransferase 51 family. This sequence in the C-terminal section; belongs to the transpeptidase family.

Its subcellular location is the cell membrane. It carries out the reaction [GlcNAc-(1-&gt;4)-Mur2Ac(oyl-L-Ala-gamma-D-Glu-L-Lys-D-Ala-D-Ala)](n)-di-trans,octa-cis-undecaprenyl diphosphate + beta-D-GlcNAc-(1-&gt;4)-Mur2Ac(oyl-L-Ala-gamma-D-Glu-L-Lys-D-Ala-D-Ala)-di-trans,octa-cis-undecaprenyl diphosphate = [GlcNAc-(1-&gt;4)-Mur2Ac(oyl-L-Ala-gamma-D-Glu-L-Lys-D-Ala-D-Ala)](n+1)-di-trans,octa-cis-undecaprenyl diphosphate + di-trans,octa-cis-undecaprenyl diphosphate + H(+). It catalyses the reaction Preferential cleavage: (Ac)2-L-Lys-D-Ala-|-D-Ala. Also transpeptidation of peptidyl-alanyl moieties that are N-acyl substituents of D-alanine.. It functions in the pathway cell wall biogenesis; peptidoglycan biosynthesis. Cell wall formation. Synthesis of cross-linked peptidoglycan from the lipid intermediates. The enzyme has a penicillin-insensitive transglycosylase N-terminal domain (formation of linear glycan strands) and a penicillin-sensitive transpeptidase C-terminal domain (cross-linking of the peptide subunits). This chain is Penicillin-binding protein 1B (mrcB), found in Buchnera aphidicola subsp. Baizongia pistaciae (strain Bp).